The chain runs to 122 residues: Double-headed protease inhibitor, submandibular gland (122 aa).

Kazal-like domains follow at residues 10–70 and 71–121; these read GGRK…KCDI and ECPQ…QCQS. 6 disulfides stabilise this stretch: cysteine 16–cysteine 50, cysteine 28–cysteine 47, cysteine 36–cysteine 68, cysteine 72–cysteine 101, cysteine 79–cysteine 98, and cysteine 87–cysteine 119.

The protein localises to the secreted. This inhibitor is composed of two homologous actively inhibiting halves: one which inhibits trypsin, the other which inhibits elastase. The chain is Double-headed protease inhibitor, submandibular gland from Mustela lutreola (European mink).